The following is a 318-amino-acid chain: Transaldolase (318 aa).

Lysine 132 (schiff-base intermediate with substrate) is an active-site residue.

Belongs to the transaldolase family. Type 1 subfamily. Homodimer.

It is found in the cytoplasm. The enzyme catalyses D-sedoheptulose 7-phosphate + D-glyceraldehyde 3-phosphate = D-erythrose 4-phosphate + beta-D-fructose 6-phosphate. Its pathway is carbohydrate degradation; pentose phosphate pathway; D-glyceraldehyde 3-phosphate and beta-D-fructose 6-phosphate from D-ribose 5-phosphate and D-xylulose 5-phosphate (non-oxidative stage): step 2/3. Its function is as follows. Transaldolase is important for the balance of metabolites in the pentose-phosphate pathway. The sequence is that of Transaldolase from Allorhizobium ampelinum (strain ATCC BAA-846 / DSM 112012 / S4) (Agrobacterium vitis (strain S4)).